Reading from the N-terminus, the 188-residue chain is Elongation factor P (188 aa).

The residue at position 34 (Lys34) is an N6-(3,6-diaminohexanoyl)-5-hydroxylysine.

It belongs to the elongation factor P family. In terms of processing, may be beta-lysylated on the epsilon-amino group of Lys-34 by the combined action of EpmA and EpmB, and then hydroxylated on the C5 position of the same residue by EpmC (if this protein is present). Lysylation is critical for the stimulatory effect of EF-P on peptide-bond formation. The lysylation moiety may extend toward the peptidyltransferase center and stabilize the terminal 3-CCA end of the tRNA. Hydroxylation of the C5 position on Lys-34 may allow additional potential stabilizing hydrogen-bond interactions with the P-tRNA.

It is found in the cytoplasm. Its pathway is protein biosynthesis; polypeptide chain elongation. Involved in peptide bond synthesis. Alleviates ribosome stalling that occurs when 3 or more consecutive Pro residues or the sequence PPG is present in a protein, possibly by augmenting the peptidyl transferase activity of the ribosome. Modification of Lys-34 is required for alleviation. The protein is Elongation factor P of Pasteurella multocida (strain Pm70).